Reading from the N-terminus, the 368-residue chain is Glutamate 5-kinase (368 aa).

Residue lysine 13 coordinates ATP. Substrate contacts are provided by serine 54, aspartate 141, and asparagine 153. Residue serine 173–aspartate 174 coordinates ATP. Positions arginine 278–alanine 355 constitute a PUA domain.

Belongs to the glutamate 5-kinase family.

The protein localises to the cytoplasm. The catalysed reaction is L-glutamate + ATP = L-glutamyl 5-phosphate + ADP. It participates in amino-acid biosynthesis; L-proline biosynthesis; L-glutamate 5-semialdehyde from L-glutamate: step 1/2. Its function is as follows. Catalyzes the transfer of a phosphate group to glutamate to form L-glutamate 5-phosphate. This is Glutamate 5-kinase from Ruegeria sp. (strain TM1040) (Silicibacter sp.).